Here is a 210-residue protein sequence, read N- to C-terminus: Menaquinone reductase, multiheme cytochrome c subunit (210 aa).

Residues 20 to 40 (GGAAPFFVGLVVALVFGWWAF) form a helical membrane-spanning segment. Positions 67, 70, 71, 88, 91, 92, 140, 143, 144, 152, 155, 156, 186, 189, 190, 205, 208, and 209 each coordinate heme.

It belongs to the multiheme cytochrome c family. The Qrc complex is composed of four subunits: QrcA, QrcB, QrcC and QrcD. Can form a supercomplex with the [NiFe] hydrogenase HynA1 and the tetraheme Type I cytochrome c3 TpIc(3), its physiological electron donors. Requires heme c as cofactor.

The protein resides in the cell inner membrane. Component of the respiratory Qrc complex, that catalyzes the reduction of the menaquinone pool using electrons transferred from the reduced periplasmic cytochrome c3, and which is probably involved in sulfate respiration. Is likely essential for growth on H(2) or formate since the periplasmic hydrogenases and/or formate dehydrogenases act as primary electron donors for the Qrc complex. In Nitratidesulfovibrio vulgaris (strain ATCC 29579 / DSM 644 / CCUG 34227 / NCIMB 8303 / VKM B-1760 / Hildenborough) (Desulfovibrio vulgaris), this protein is Menaquinone reductase, multiheme cytochrome c subunit.